The chain runs to 773 residues: Linolenate 9R-lipoxygenase (773 aa).

Residues 176–773 (YEWVDSKKKS…LEDLMMSINI (598 aa)) form the Lipoxygenase domain. Fe cation contacts are provided by His-515, His-520, and Ile-773.

This sequence belongs to the lipoxygenase family.

It catalyses the reaction (9Z,12Z,15Z)-octadecatrienoate + O2 = (9R,10E,12Z,15Z)-9-hydroperoxyoctadeca-10,12,15-trienoate. Its pathway is lipid metabolism; oxylipin biosynthesis. Its function is as follows. Catalyzes the conversion of alpha-linoleate to (9R,10E,12Z,15Z)-9-hydroperoxyoctadeca-10,12,15-trienoate in oxylipin biosynthesis. Also converts alpha-linoleate to (9R,10E,12Z)-9-hydroperoxyoctadeca-10,12-dienoate. The polypeptide is Linolenate 9R-lipoxygenase (Nostoc sp. (strain PCC 7120 / SAG 25.82 / UTEX 2576)).